The primary structure comprises 130 residues: Histone H2A type 3 (130 aa).

The tract at residues 1–22 (MSGRGKQGGKARAKAKSRSSRA) is disordered. At Ser2 the chain carries N-acetylserine. Ser2 carries the phosphoserine; by RPS6KA5 modification. At Arg4 the chain carries Citrulline; alternate. Arg4 carries the post-translational modification Symmetric dimethylarginine; by PRMT5; alternate. Lys6 carries the post-translational modification N6-(2-hydroxyisobutyryl)lysine. The span at 7–19 (QGGKARAKAKSRS) shows a compositional bias: basic residues. Lys10 carries the post-translational modification N6-(2-hydroxyisobutyryl)lysine; alternate. N6-(beta-hydroxybutyryl)lysine; alternate is present on residues Lys10 and Lys14. An N6-lactoyllysine; alternate modification is found at Lys10. N6-succinyllysine; alternate is present on Lys10. Lys14 participates in a covalent cross-link: Glycyl lysine isopeptide (Lys-Gly) (interchain with G-Cter in ubiquitin); alternate. Lys16 participates in a covalent cross-link: Glycyl lysine isopeptide (Lys-Gly) (interchain with G-Cter in ubiquitin). Lys37 carries the N6-(2-hydroxyisobutyryl)lysine; alternate modification. Lys37 is subject to N6-(beta-hydroxybutyryl)lysine; alternate. Position 37 is an N6-crotonyllysine; alternate (Lys37). An N6-(2-hydroxyisobutyryl)lysine mark is found at Lys75 and Lys76. An N6-(2-hydroxyisobutyryl)lysine; alternate modification is found at Lys96. N6-(beta-hydroxybutyryl)lysine; alternate is present on Lys96. The residue at position 96 (Lys96) is an N6-succinyllysine; alternate. At Lys96 the chain carries N6-glutaryllysine; alternate. The residue at position 105 (Gln105) is an N5-methylglutamine. Lys119 is subject to N6-(2-hydroxyisobutyryl)lysine; alternate. Lys119 carries the N6-(beta-hydroxybutyryl)lysine; alternate modification. N6-crotonyllysine; alternate is present on residues Lys119 and Lys120. N6-glutaryllysine; alternate is present on residues Lys119 and Lys120. Residue Lys120 forms a Glycyl lysine isopeptide (Lys-Gly) (interchain with G-Cter in ubiquitin); alternate linkage. At Thr121 the chain carries Phosphothreonine; by DCAF1. Lys126 carries the post-translational modification N6-crotonyllysine; alternate. Lys126 is subject to N6-glutaryllysine; alternate.

It belongs to the histone H2A family. As to quaternary structure, the nucleosome is a histone octamer containing two molecules each of H2A, H2B, H3 and H4 assembled in one H3-H4 heterotetramer and two H2A-H2B heterodimers. The octamer wraps approximately 147 bp of DNA. In terms of processing, deiminated on Arg-4 in granulocytes upon calcium entry. Post-translationally, monoubiquitination of Lys-120 (H2AK119Ub) by RING1, TRIM37 and RNF2/RING2 complex gives a specific tag for epigenetic transcriptional repression and participates in X chromosome inactivation of female mammals. It is involved in the initiation of both imprinted and random X inactivation. Ubiquitinated H2A is enriched in inactive X chromosome chromatin. Ubiquitination of H2A functions downstream of methylation of 'Lys-27' of histone H3 (H3K27me). H2AK119Ub by RNF2/RING2 can also be induced by ultraviolet and may be involved in DNA repair. Monoubiquitination of Lys-120 (H2AK119Ub) by TRIM37 may promote transformation of cells in a number of breast cancers. Following DNA double-strand breaks (DSBs), it is ubiquitinated through 'Lys-63' linkage of ubiquitin moieties by the E2 ligase UBE2N and the E3 ligases RNF8 and RNF168, leading to the recruitment of repair proteins to sites of DNA damage. Ubiquitination at Lys-14 and Lys-16 (H2AK13Ub and H2AK15Ub, respectively) in response to DNA damage is initiated by RNF168 that mediates monoubiquitination at these 2 sites, and 'Lys-63'-linked ubiquitin are then conjugated to monoubiquitin; RNF8 is able to extend 'Lys-63'-linked ubiquitin chains in vitro. Deubiquitinated by USP51 at Lys-14 and Lys-16 (H2AK13Ub and H2AK15Ub, respectively) after damaged DNA is repaired. H2AK119Ub and ionizing radiation-induced 'Lys-63'-linked ubiquitination (H2AK13Ub and H2AK15Ub) are distinct events. Phosphorylation on Ser-2 (H2AS1ph) is enhanced during mitosis. Phosphorylation on Ser-2 by RPS6KA5/MSK1 directly represses transcription. Acetylation of H3 inhibits Ser-2 phosphorylation by RPS6KA5/MSK1. Phosphorylation at Thr-121 (H2AT120ph) by DCAF1 is present in the regulatory region of many tumor suppresor genes and down-regulates their transcription. In terms of processing, glutamine methylation at Gln-105 (H2AQ104me) by FBL is specifically dedicated to polymerase I. It is present at 35S ribosomal DNA locus and impairs binding of the FACT complex. Post-translationally, symmetric dimethylation on Arg-4 by the PRDM1/PRMT5 complex may play a crucial role in the germ-cell lineage. Crotonylation (Kcr) is specifically present in male germ cells and marks testis-specific genes in post-meiotic cells, including X-linked genes that escape sex chromosome inactivation in haploid cells. Crotonylation marks active promoters and enhancers and confers resistance to transcriptional repressors. It is also associated with post-meiotically activated genes on autosomes. In terms of processing, lactylated in macrophages by EP300/P300 by using lactoyl-CoA directly derived from endogenous or exogenous lactate, leading to stimulates gene transcription.

It is found in the nucleus. The protein resides in the chromosome. Core component of nucleosome. Nucleosomes wrap and compact DNA into chromatin, limiting DNA accessibility to the cellular machineries which require DNA as a template. Histones thereby play a central role in transcription regulation, DNA repair, DNA replication and chromosomal stability. DNA accessibility is regulated via a complex set of post-translational modifications of histones, also called histone code, and nucleosome remodeling. The sequence is that of Histone H2A type 3 from Homo sapiens (Human).